A 444-amino-acid polypeptide reads, in one-letter code: Glutamate--tRNA ligase 1 (444 aa).

The 'HIGH' region signature appears at 10–20 (PSPTGRLHLGN). Residues 241–245 (GLSKR) carry the 'KMSKS' region motif. Lys-244 lines the ATP pocket.

It belongs to the class-I aminoacyl-tRNA synthetase family. Glutamate--tRNA ligase type 1 subfamily. Monomer.

The protein resides in the cytoplasm. The enzyme catalyses tRNA(Glu) + L-glutamate + ATP = L-glutamyl-tRNA(Glu) + AMP + diphosphate. Its function is as follows. Catalyzes the attachment of glutamate to tRNA(Glu) in a two-step reaction: glutamate is first activated by ATP to form Glu-AMP and then transferred to the acceptor end of tRNA(Glu). The sequence is that of Glutamate--tRNA ligase 1 from Rhodospirillum rubrum (strain ATCC 11170 / ATH 1.1.1 / DSM 467 / LMG 4362 / NCIMB 8255 / S1).